Here is a 756-residue protein sequence, read N- to C-terminus: Hormone-sensitive lipase (756 aa).

An Involved in the stabilization of the negatively charged intermediate by the formation of the oxyanion hole motif is present at residues 350–352 (HGG). Residue Ser424 is part of the active site. Disordered regions lie at residues 542–570 (SVSK…TDSL) and 581–600 (RNSS…ETLG). Ser552 carries the phosphoserine; by PKA modification. Ser554 is subject to Phosphoserine; by AMPK. Residues 581-596 (RNSSDTTDTPELSLSA) show a composition bias toward polar residues. A phosphoserine mark is found at Ser595 and Ser649. Residues Asp692 and His722 contribute to the active site.

This sequence belongs to the 'GDXG' lipolytic enzyme family. Monomer and homodimer. Interacts with CAVIN1 in the adipocyte cytoplasm. Interacts with PLIN5. In terms of processing, phosphorylation by AMPK reduces its translocation towards the lipid droplets.

The protein localises to the cell membrane. It localises to the membrane. The protein resides in the caveola. Its subcellular location is the cytoplasm. It is found in the cytosol. The protein localises to the lipid droplet. It catalyses the reaction a diacylglycerol + H2O = a monoacylglycerol + a fatty acid + H(+). The enzyme catalyses a triacylglycerol + H2O = a diacylglycerol + a fatty acid + H(+). It carries out the reaction a monoacylglycerol + H2O = glycerol + a fatty acid + H(+). The catalysed reaction is Hydrolyzes glycerol monoesters of long-chain fatty acids.. It catalyses the reaction 1,2-di-(9Z-octadecenoyl)-glycerol + (9Z)-octadecenoate + H(+) = 1,2,3-tri-(9Z-octadecenoyl)-glycerol + H2O. The enzyme catalyses 2,3-di-(9Z)-octadecenoyl-sn-glycerol + H2O = 2-(9Z-octadecenoyl)-glycerol + (9Z)-octadecenoate + H(+). It carries out the reaction cholesteryl (9Z-octadecenoate) + H2O = cholesterol + (9Z)-octadecenoate + H(+). The catalysed reaction is 1,2,3-tri-(9Z-octadecenoyl)-glycerol + H2O = di-(9Z)-octadecenoylglycerol + (9Z)-octadecenoate + H(+). It catalyses the reaction all-trans-retinyl hexadecanoate + H2O = all-trans-retinol + hexadecanoate + H(+). The enzyme catalyses 1,2-di-(9Z-octadecenoyl)-glycerol + H2O = (9Z-octadecenoyl)-glycerol + (9Z)-octadecenoate + H(+). It carries out the reaction 2-(5Z,8Z,11Z,14Z-eicosatetraenoyl)-glycerol + H2O = glycerol + (5Z,8Z,11Z,14Z)-eicosatetraenoate + H(+). The catalysed reaction is 1-(9Z-octadecenoyl)-glycerol + H2O = glycerol + (9Z)-octadecenoate + H(+). It catalyses the reaction 2-(9Z-octadecenoyl)-glycerol + H2O = glycerol + (9Z)-octadecenoate + H(+). The enzyme catalyses 1-O-hexadecyl-2-acetyl-sn-glycerol + H2O = 1-O-hexadecyl-sn-glycerol + acetate + H(+). It carries out the reaction 1,2-di-(9Z-octadecenoyl)-sn-glycerol + H2O = (9Z-octadecenoyl)-glycerol + (9Z)-octadecenoate + H(+). The catalysed reaction is 1,3-di-(9Z-octadecenoyl)-glycerol + H2O = 1-(9Z-octadecenoyl)-glycerol + (9Z)-octadecenoate + H(+). It catalyses the reaction 1,2-di-(9Z-octadecenoyl)-glycerol + H2O = 2-(9Z-octadecenoyl)-glycerol + (9Z)-octadecenoate + H(+). It participates in glycerolipid metabolism; triacylglycerol degradation. In terms of biological role, lipase with broad substrate specificity, catalyzing the hydrolysis of triacylglycerols (TAGs), diacylglycerols (DAGs), monoacylglycerols (MAGs), cholesteryl esters and retinyl esters. Shows a preferential hydrolysis of DAGs over TAGs and MAGs. Preferentially hydrolyzes fatty acid (FA) esters at the sn-3 position of the glycerol backbone in DAGs and FA esters at the sn-1 and sn-2 positions of the glycerol backbone in TAGs. Catalyzes the hydrolysis of 2-arachidonoylglycerol, an endocannabinoid and of 2-acetyl monoalkylglycerol ether, the penultimate precursor of the pathway for de novo synthesis of platelet-activating factor. In adipose tissue and heart, it primarily hydrolyzes stored triglycerides to free fatty acids, while in steroidogenic tissues, it principally converts cholesteryl esters to free cholesterol for steroid hormone production. The sequence is that of Hormone-sensitive lipase (LIPE) from Bos taurus (Bovine).